We begin with the raw amino-acid sequence, 206 residues long: Putative apoptosis inhibitor 021L (206 aa).

Residues 95-105 (TSKSPVSNQPS) are compositionally biased toward polar residues. Positions 95–114 (TSKSPVSNQPSPEEDEPIPD) are disordered. An RING-type zinc finger spans residues 157-195 (CVVCQANVRNVVFVPCNHLATCISCSANPLMPKKCPMCR).

This sequence belongs to the IIV-6 193R family.

Its function is as follows. Plays a role early in infection by preventing host cell apoptosis. The chain is Putative apoptosis inhibitor 021L from Aedes vexans (Inland floodwater mosquito).